The chain runs to 494 residues: BTB/POZ domain and ankyrin repeat-containing protein NH5.2 (494 aa).

The BTB domain occupies 25 to 131 (SDVAFSVEGR…LYSGQASVAA (107 aa)). A disordered region spans residues 60–95 (NHQPPPPPPPPLNWPTAGGGGGGSGGGGRGGAGGGG). A compositionally biased stretch (pro residues) spans 61-72 (HQPPPPPPPPLN). The span at 76 to 95 (AGGGGGGSGGGGRGGAGGGG) shows a compositional bias: gly residues. Residues 137–151 (LPGCGARGCWHTRCG) form a C2HC NPR-type zinc finger. Residues cysteine 140, cysteine 145, histidine 147, and cysteine 150 each coordinate Zn(2+). 4 ANK repeats span residues 275-303 (NKIRRMRRALDAADIELVKLMVMGEGLDL), 304-334 (DDALAVHYAVQHCNRDVVKALLELGAADVNS), 339-368 (TGKTALHLAAEMVSPDMVSVLLDHHADPNS), and 372-406 (DGVTPLDVLRSLTSEFLFKGAVPGLTHIEPNKLRL). 2 disordered regions span residues 421 to 443 (DDGAPVTGGEAGGSDGGNFPRSD) and 471 to 494 (GEGRKSNNGRGSPPPAMYFPNGFA).

It belongs to the plant 'ANKYRIN-BTB/POZ' family. 'NOOT-BOP-COCH-like' (NBCL) subfamily. As to quaternary structure, homodimer. Interacts with TGAL5, TGAL7, TGAL8 and TGAL9.

The protein localises to the nucleus. Its subcellular location is the cytoplasm. Its pathway is protein modification; protein ubiquitination. In terms of biological role, may act as a substrate-specific adapter of an E3 ubiquitin-protein ligase complex (CUL3-RBX1-BTB) which mediates the ubiquitination and subsequent proteasomal degradation of target proteins. Transcriptional co-regulator involved in the promotion of leaf and floral meristem fate and determinacy. Required for the abscission of senescent organs, probably by regulating the cell wall disorganization in abscission zones (AZs, e.g. pulvini at the base of leaves). This Oryza sativa subsp. japonica (Rice) protein is BTB/POZ domain and ankyrin repeat-containing protein NH5.2.